The primary structure comprises 296 residues: Transmembrane O-methyltransferase (296 aa).

A helical membrane pass occupies residues 36–56 (VGTMSPAIALAFLPLVVTLLV). S-adenosyl-L-methionine-binding positions include glutamate 142, 144–145 (GT), serine 150, glutamate 168, and serine 198.

This sequence belongs to the class I-like SAM-binding methyltransferase superfamily. Cation-dependent O-methyltransferase family. Interacts with LHFPL5, PCDH15, TMC1, TMC2 and TMIE. Interacts directly with TMC1. The interaction of TOMT with TMC1 and TMC2 is required for the transportation of TMC1/2 into the stereocilia of hair cells.

The protein resides in the membrane. The protein localises to the cytoplasm. It localises to the endoplasmic reticulum. The enzyme catalyses a catechol + S-adenosyl-L-methionine = a guaiacol + S-adenosyl-L-homocysteine + H(+). Functionally, catalyzes the O-methylation, and thereby the inactivation, of catecholamine neurotransmitters and catechol hormones. Required for auditory function. Component of the cochlear hair cell's mechanotransduction (MET) machinery. Involved in the assembly of the asymmetric tip-link MET complex. Required for transportation of TMC1 and TMC2 proteins into the mechanically sensitive stereocilia of the hair cells. The function in MET is independent of the enzymatic activity. The protein is Transmembrane O-methyltransferase of Macaca mulatta (Rhesus macaque).